Consider the following 148-residue polypeptide: Ribonuclease H (148 aa).

The region spanning 1-141 is the RNase H type-1 domain; sequence MKTVEIYTDG…ADELANLGVK (141 aa). Mg(2+) is bound by residues D9, E47, D69, and D133.

It belongs to the RNase H family. Monomer. Requires Mg(2+) as cofactor.

Its subcellular location is the cytoplasm. It catalyses the reaction Endonucleolytic cleavage to 5'-phosphomonoester.. In terms of biological role, endonuclease that specifically degrades the RNA of RNA-DNA hybrids. The protein is Ribonuclease H of Hahella chejuensis (strain KCTC 2396).